A 248-amino-acid polypeptide reads, in one-letter code: Cutinase cut1 (248 aa).

Positions 1-17 (MRSLSLFTALLAGQAFA) are cleaved as a signal peptide. Cysteine 79 and cysteine 153 form a disulfide bridge. Serine 164 functions as the Nucleophile in the catalytic mechanism. Cysteine 212 and cysteine 219 form a disulfide bridge. Aspartate 216 is an active-site residue. Residue histidine 229 is the Proton donor/acceptor of the active site.

The protein belongs to the cutinase family. Post-translationally, the 2 disulfide bonds play a critical role in holding the catalytic residues in juxta-position; reduction of the disulfide bridges results in the complete inactivation of the enzyme.

The protein localises to the secreted. It catalyses the reaction cutin + H2O = cutin monomers.. Its function is as follows. Catalyzes the hydrolysis of complex carboxylic polyesters found in the cell wall of plants. May degrade cutin, a macromolecule that forms the structure of the plant cuticle. May also degrade suberin, a specialized macromolecule found in the cell wall of various plant tissues. The sequence is that of Cutinase cut1 from Trichoderma harzianum (Hypocrea lixii).